Reading from the N-terminus, the 380-residue chain is Chromo domain-containing protein 2 (380 aa).

Disordered stretches follow at residues 14 to 58 (ISES…SLYG) and 100 to 156 (KLSP…VPLN). Residues 33–52 (NSINNKSSTASLESPQNGSW) show a composition bias toward polar residues. Residues 108–119 (EDSEDKKEEDES) show a composition bias toward acidic residues. Residues 121-140 (SYKNEFKSSSSASVSSNFEK) are compositionally biased toward low complexity. The Chromo domain maps to 176–238 (FAVEMILDSR…SRGGKPDLSS (63 aa)). The tract at residues 250-273 (SNEASYVEKDESSNSDDSISYKRR) is disordered.

The protein localises to the nucleus. In terms of biological role, component of the kinetochore which plays a role in stabilizing microtubules and so allowing accurate chromosome segregation. The chain is Chromo domain-containing protein 2 (chp2) from Schizosaccharomyces pombe (strain 972 / ATCC 24843) (Fission yeast).